The sequence spans 128 residues: Holo-[acyl-carrier-protein] synthase (128 aa).

Mg(2+) contacts are provided by aspartate 8 and glutamate 58.

The protein belongs to the P-Pant transferase superfamily. AcpS family. Mg(2+) serves as cofactor.

It localises to the cytoplasm. The catalysed reaction is apo-[ACP] + CoA = holo-[ACP] + adenosine 3',5'-bisphosphate + H(+). Functionally, transfers the 4'-phosphopantetheine moiety from coenzyme A to a Ser of acyl-carrier-protein. The protein is Holo-[acyl-carrier-protein] synthase of Alkalilimnicola ehrlichii (strain ATCC BAA-1101 / DSM 17681 / MLHE-1).